A 520-amino-acid chain; its full sequence is Biotinidase (520 aa).

A signal peptide spans Met1–Gly21. The region spanning Asn49–Pro333 is the CN hydrolase domain. Residue Glu89 is the Proton acceptor of the active site. N-linked (GlcNAc...) asparagine glycosylation is found at Asn96, Asn127, and Asn180. Lys189 (proton donor) is an active-site residue. Cys222 functions as the Nucleophile in the catalytic mechanism. N-linked (GlcNAc...) asparagine glycans are attached at residues Asn326, Asn379, and Asn466.

The protein belongs to the carbon-nitrogen hydrolase superfamily. BTD/VNN family.

It is found in the secreted. Its subcellular location is the extracellular space. It carries out the reaction biocytin + H2O = biotin + L-lysine. The enzyme catalyses biotin amide + H2O = biotin + NH4(+). Its function is as follows. Catalytic release of biotin from biocytin, the product of biotin-dependent carboxylases degradation. The sequence is that of Biotinidase (Btd) from Mus musculus (Mouse).